A 397-amino-acid chain; its full sequence is Purine ribonucleoside efflux pump NepI (397 aa).

Topologically, residues 1-21 are cytoplasmic; that stretch reads MNENIAEKFRADGVARPNWSA. Residues 22-42 form a helical membrane-spanning segment; that stretch reads VFAVAFCVACLITVEFLPVSL. The Periplasmic segment spans residues 43 to 54; sequence LTPMAQDLGISE. A helical membrane pass occupies residues 55–75; that stretch reads GVAGQSVTVTAFVAMFSSLFI. The Cytoplasmic segment spans residues 76–85; the sequence is TQIIQATDRR. Residues 86 to 106 form a helical membrane-spanning segment; the sequence is YIVILFAVLLTASCLMVSFAN. A topological domain (periplasmic) is located at residue serine 107. The helical transmembrane segment at 108–128 threads the bilayer; the sequence is FTLLLLGRACLGLALGGFWAM. The Cytoplasmic portion of the chain corresponds to 129 to 147; it reads SASLTMRLVPARTVPKALS. A helical membrane pass occupies residues 148–168; sequence VIFGAVSIALVIAAPLGSFLG. The Periplasmic portion of the chain corresponds to 169–175; it reads GIIGWRN. A helical membrane pass occupies residues 176-196; sequence VFNAAAVMGVLCVIWVVKSLP. Residues 197-215 lie on the Cytoplasmic side of the membrane; it reads SLPGEPSHQKQNMFSLLQR. Residues 216–236 form a helical membrane-spanning segment; sequence PGVMAGMIAIFMSFAGQFAFF. The Periplasmic portion of the chain corresponds to 237 to 255; the sequence is TYIRPVYMNLAGFDVDGLT. The helical transmembrane segment at 256-276 threads the bilayer; the sequence is LVLLSFGIASFVGTSFSSYVL. At 277-281 the chain is on the cytoplasmic side; the sequence is KRSVK. The chain crosses the membrane as a helical span at residues 282–302; sequence LALAGAPLLLALSALTLIVWG. Residues 303 to 305 are Periplasmic-facing; sequence SDK. Residues 306–326 traverse the membrane as a helical segment; it reads TVAAVIAIIWGLAFALVPVGW. Residues 327-343 are Cytoplasmic-facing; the sequence is STWITRSLADQAEKAGS. Residues 344-364 traverse the membrane as a helical segment; that stretch reads IQVAVIQLANTCGAAVGGYAL. At 365–366 the chain is on the periplasmic side; sequence DN. Residues 367 to 387 traverse the membrane as a helical segment; sequence FGLLSPLALSGGLMLLTALVV. The Cytoplasmic segment spans residues 388–397; it reads AAKVRITPMS.

It belongs to the major facilitator superfamily. DHA1 family. NepI (TC 2.A.1.2.26) subfamily.

It localises to the cell inner membrane. The catalysed reaction is inosine(in) + H(+)(out) = inosine(out) + H(+)(in). The enzyme catalyses guanosine(in) + H(+)(out) = guanosine(out) + H(+)(in). In terms of biological role, involved in the efflux of purine ribonucleosides, such as inosine and guanosine. The sequence is that of Purine ribonucleoside efflux pump NepI from Salmonella paratyphi B (strain ATCC BAA-1250 / SPB7).